A 941-amino-acid chain; its full sequence is Isoleucine--tRNA ligase (941 aa).

Positions 58–68 match the 'HIGH' region motif; that stretch reads PYANGNIHLGH. Glu564 contacts L-isoleucyl-5'-AMP. The short motif at 605–609 is the 'KMSKS' region element; it reads KMSKS. Lys608 serves as a coordination point for ATP. 4 residues coordinate Zn(2+): Cys904, Cys907, Cys924, and Cys927.

It belongs to the class-I aminoacyl-tRNA synthetase family. IleS type 1 subfamily. As to quaternary structure, monomer. The cofactor is Zn(2+).

It localises to the cytoplasm. It carries out the reaction tRNA(Ile) + L-isoleucine + ATP = L-isoleucyl-tRNA(Ile) + AMP + diphosphate. In terms of biological role, catalyzes the attachment of isoleucine to tRNA(Ile). As IleRS can inadvertently accommodate and process structurally similar amino acids such as valine, to avoid such errors it has two additional distinct tRNA(Ile)-dependent editing activities. One activity is designated as 'pretransfer' editing and involves the hydrolysis of activated Val-AMP. The other activity is designated 'posttransfer' editing and involves deacylation of mischarged Val-tRNA(Ile). The polypeptide is Isoleucine--tRNA ligase (Hahella chejuensis (strain KCTC 2396)).